The primary structure comprises 163 residues: NADH-quinone oxidoreductase subunit I (163 aa).

4Fe-4S ferredoxin-type domains follow at residues 53–83 and 94–123; these read LRRY…IEAG and VRYD…EGPN. C63, C66, C69, C73, C103, C106, C109, and C113 together coordinate [4Fe-4S] cluster.

This sequence belongs to the complex I 23 kDa subunit family. NDH-1 is composed of 14 different subunits. Subunits NuoA, H, J, K, L, M, N constitute the membrane sector of the complex. It depends on [4Fe-4S] cluster as a cofactor.

It localises to the cell inner membrane. The catalysed reaction is a quinone + NADH + 5 H(+)(in) = a quinol + NAD(+) + 4 H(+)(out). Its function is as follows. NDH-1 shuttles electrons from NADH, via FMN and iron-sulfur (Fe-S) centers, to quinones in the respiratory chain. The immediate electron acceptor for the enzyme in this species is believed to be ubiquinone. Couples the redox reaction to proton translocation (for every two electrons transferred, four hydrogen ions are translocated across the cytoplasmic membrane), and thus conserves the redox energy in a proton gradient. This is NADH-quinone oxidoreductase subunit I from Brucella canis (strain ATCC 23365 / NCTC 10854 / RM-666).